Reading from the N-terminus, the 570-residue chain is MFHPGMTSQPSTSNQMYYDPLYGAEQIVQCNPMDYHQANILCGMQYFNNSHNRYPLLPQMPPQFTNDHPYDFPNVPTISTLDEASSFNGFLIPSQPSSYNNNNISCVFTPTPCTSSQASSQPPPTPTVNPTPIPPNAGAVLTTAMDSCQQISHVLQCYQQGGEDSDFVRKAIESLVKKLKDKRIELDALITAVTSNGKQPTGCVTIQRSLDGRLQVAGRKGVPHVVYARIWRWPKVSKNELVKLVQCQTSSDHPDNICINPYHYERVVSNRITSADQSLHVENSPMKSEYLGDAGVIDSCSDWPNTPPDNNFNGGFAPDQPQLVTPIISDIPIDLNQIYVPTPPQLLDNWCSIIYYELDTPIGETFKVSARDHGKVIVDGGMDPHGENEGRLCLGALSNVHRTEASEKARIHIGRGVELTAHADGNISITSNCKIFVRSGYLDYTHGSEYSSKAHRFTPNESSFTVFDIRWAYMQMLRRSRSSNEAVRAQAAAVAGYAPMSVMPAIMPDSGVDRMRRDFCTIAISFVKAWGDVYQRKTIKETPCWIEVTLHRPLQILDQLLKNSSQFGSS.

Positions 115 to 134 (SSQASSQPPPTPTVNPTPIP) are disordered. Positions 121–134 (QPPPTPTVNPTPIP) are enriched in pro residues. The 124-residue stretch at 150–273 (QISHVLQCYQ…YERVVSNRIT (124 aa)) folds into the MH1 domain. Zn(2+) is bound by residues Cys203, Cys247, Cys258, and His263. Residues 350-570 (WCSIIYYELD…LKNSSQFGSS (221 aa)) form the MH2 domain.

Belongs to the dwarfin/SMAD family.

The protein resides in the cytoplasm. Its subcellular location is the nucleus. Functionally, involved in TGF-beta pathway. This Caenorhabditis elegans protein is Dwarfin sma-4 (sma-4).